Here is a 379-residue protein sequence, read N- to C-terminus: MMRKKSFWLGMLTAFMLVFTMAFSDSASAAQPAKNVEKDYIVGFKSGVKTASVKKDIIKESGGKVDKQFRIINAAKAKLDKEALKEVKNDPDVAYVEEDHVAHALAQTVPYGIPLIKADKVQAQGFKGANVKVAVLDTGIQASHPDLNVVGGASFVAGEAYNTDGNGHGTHVAGTVAALDNTTGVLGVAPSVSLYAVKVLNSSGSGSYSGIVSGIEWATTNGMDVINMSLGGASGSTAMKQAVDNAYAKGVVVVAAAGNSGSSGNTNTIGYPAKYDSVIAVGAVDSNSNRASFSSVGAELEVMAPGAGVYSTYPTNTYATLNGTSMASPHVAGAAALILSKHPNLSASQVRNRLSSTATYLGSSFYYGKGLINVEAAAQ.

Residues 1–29 form the signal peptide; it reads MMRKKSFWLGMLTAFMLVFTMAFSDSASA. The propeptide occupies 30-105; that stretch reads AQPAKNVEKD…VEEDHVAHAL (76 aa). The 59-residue stretch at 44-102 folds into the Inhibitor I9 domain; it reads FKSGVKTASVKKDIIKESGGKVDKQFRIINAAKAKLDKEALKEVKNDPDVAYVEEDHVA. Glutamine 107 contacts Ca(2+). The 269-residue stretch at 110–378 folds into the Peptidase S8 domain; sequence PYGIPLIKAD…KGLINVEAAA (269 aa). Residue aspartate 137 is the Charge relay system of the active site. Residue aspartate 146 coordinates Ca(2+). The Charge relay system role is filled by histidine 168. Residues leucine 179, asparagine 181, threonine 183, valine 185, alanine 273, tyrosine 275, and valine 278 each contribute to the Ca(2+) site. Serine 325 serves as the catalytic Charge relay system.

This sequence belongs to the peptidase S8 family. Ca(2+) serves as cofactor.

The protein resides in the secreted. It catalyses the reaction Hydrolysis of proteins with broad specificity for peptide bonds, and a preference for a large uncharged residue in P1. Hydrolyzes peptide amides.. Its activity is regulated as follows. Inhibited by p-chlorophenyl and 1-naphthyl boronic acid derivatives. Functionally, subtilisin is an extracellular alkaline serine protease, it catalyzes the hydrolysis of proteins and peptide amides. Shows high specificity for aromatic and hydrophobic amino acids in the P1 substrate position. May play an important role in the degradation of feather keratin. This Bacillus licheniformis protein is Subtilisin Carlsberg.